A 122-amino-acid chain; its full sequence is Large ribosomal subunit protein uL14 (122 aa).

It belongs to the universal ribosomal protein uL14 family. In terms of assembly, part of the 50S ribosomal subunit. Forms a cluster with proteins L3 and L19. In the 70S ribosome, L14 and L19 interact and together make contacts with the 16S rRNA in bridges B5 and B8.

Functionally, binds to 23S rRNA. Forms part of two intersubunit bridges in the 70S ribosome. This Wolinella succinogenes (strain ATCC 29543 / DSM 1740 / CCUG 13145 / JCM 31913 / LMG 7466 / NCTC 11488 / FDC 602W) (Vibrio succinogenes) protein is Large ribosomal subunit protein uL14.